We begin with the raw amino-acid sequence, 455 residues long: Argininosuccinate lyase (455 aa).

This sequence belongs to the lyase 1 family. Argininosuccinate lyase subfamily.

It localises to the cytoplasm. It carries out the reaction 2-(N(omega)-L-arginino)succinate = fumarate + L-arginine. It functions in the pathway amino-acid biosynthesis; L-arginine biosynthesis; L-arginine from L-ornithine and carbamoyl phosphate: step 3/3. This Shewanella halifaxensis (strain HAW-EB4) protein is Argininosuccinate lyase.